We begin with the raw amino-acid sequence, 264 residues long: TLC domain-containing protein 4-B (264 aa).

The next 6 membrane-spanning stretches (helical) occupy residues 6–26, 50–70, 84–104, 110–130, 169–189, and 210–230; these read VYVV…VSPV, LVST…LWYD, LVKL…LLLA, MGDV…GYVL, LVVA…IAVM, and LAIQ…NIIW. Positions 41 to 243 constitute a TLC domain; that stretch reads NKLNDWNSRL…IARGCYKVIT (203 aa).

It belongs to the TLCD4 family.

Its subcellular location is the membrane. This Danio rerio (Zebrafish) protein is TLC domain-containing protein 4-B (tlcd4b).